A 637-amino-acid chain; its full sequence is Chaperone protein DnaK (637 aa).

The residue at position 203 (Thr-203) is a Phosphothreonine; by autocatalysis. Positions 600–637 (SAVYGQQQEQGAPAQEEPSAEGKKNDDEGTVEGEFREV) are disordered. The span at 604–616 (GQQQEQGAPAQEE) shows a compositional bias: low complexity. The span at 619-637 (AEGKKNDDEGTVEGEFREV) shows a compositional bias: basic and acidic residues.

Belongs to the heat shock protein 70 family.

In terms of biological role, acts as a chaperone. In Dehalococcoides mccartyi (strain ATCC BAA-2266 / KCTC 15142 / 195) (Dehalococcoides ethenogenes (strain 195)), this protein is Chaperone protein DnaK.